The chain runs to 558 residues: Phosphatidylserine lipase ABHD16A (558 aa).

2 consecutive transmembrane segments (helical) span residues I60 to F80 and V93 to L113. At R114 to L558 the chain is on the cytoplasmic side. In terms of domain architecture, AB hydrolase-1 spans L281–L407. Residues S355, D430, and H507 each act as charge relay system in the active site.

The protein belongs to the AB hydrolase superfamily. ABHD16 family.

Its subcellular location is the membrane. It carries out the reaction 1-heptadecanoyl-2-(5Z,8Z,11Z,14Z-eicosatetraenoyl)-sn-glycero-3-phosphoserine + H2O = 1-heptadecanoyl-sn-glycero-3-phosphoserine + (5Z,8Z,11Z,14Z)-eicosatetraenoate + H(+). The catalysed reaction is 1-hexadecanoyl-2-(9Z-octadecenoyl)-sn-glycero-3-phospho-L-serine + H2O = 1-hexadecanoyl-sn-glycero-3-phospho-L-serine + (9Z)-octadecenoate + H(+). The enzyme catalyses 1-octadecanoyl-2-(9Z,12Z-octadecadienoyl)-sn-glycero-3-phosphoserine + H2O = 1-octadecanoyl-sn-glycero-3-phosphoserine + (9Z,12Z)-octadecadienoate + H(+). It catalyses the reaction 1-heptadecanoyl-2-(5Z,8Z,11Z,14Z-eicosatetraenoyl)-sn-glycero-3-phosphocholine + H2O = 1-heptadecanoyl-sn-glycero-3-phosphocholine + (5Z,8Z,11Z,14Z)-eicosatetraenoate + H(+). It carries out the reaction 1-hexadecanoyl-2-(9Z-octadecenoyl)-sn-glycero-3-phosphoglycerol + H2O = 1-hexadecanoyl-sn-glycero-3-phosphoglycerol + (9Z)-octadecenoate + H(+). The catalysed reaction is 1-hexadecanoyl-2-(9Z-octadecenoyl)-sn-glycero-3-phospho-(1D-myo-inositol) + H2O = 1-hexadecanoyl-sn-glycero-3-phospho-(1D-myo-inositol) + (9Z)-octadecenoate + H(+). The enzyme catalyses 1-heptadecanoyl-2-(5Z,8Z,11Z,14Z-eicosatetraenoyl)-sn-glycero-3-phosphoethanolamine + H2O = 1-heptadecanoyl-sn-glycero-3-phosphoethanolamine + (5Z,8Z,11Z,14Z)-eicosatetraenoate + H(+). It catalyses the reaction 1-hexadecanoyl-2-(9Z-octadecenoyl)-sn-glycero-3-phospho-(1'-sn-glycerol) + H2O = 1-hexadecanoyl-sn-glycero-3-phospho-(1'-sn-glycerol) + (9Z)-octadecenoate + H(+). It carries out the reaction Hydrolyzes glycerol monoesters of long-chain fatty acids.. The catalysed reaction is 1-tetradecanoylglycerol + H2O = tetradecanoate + glycerol + H(+). The enzyme catalyses 2-hexadecanoylglycerol + H2O = glycerol + hexadecanoate + H(+). It catalyses the reaction 1-(9Z-octadecenoyl)-glycerol + H2O = glycerol + (9Z)-octadecenoate + H(+). It carries out the reaction 2-(9Z-octadecenoyl)-glycerol + H2O = glycerol + (9Z)-octadecenoate + H(+). The catalysed reaction is 2-(9Z,12Z-octadecadienoyl)-glycerol + H2O = (9Z,12Z)-octadecadienoate + glycerol + H(+). The enzyme catalyses 1-(5Z,8Z,11Z,14Z-eicosatetraenoyl)-glycerol + H2O = glycerol + (5Z,8Z,11Z,14Z)-eicosatetraenoate + H(+). It catalyses the reaction 2-(5Z,8Z,11Z,14Z-eicosatetraenoyl)-glycerol + H2O = glycerol + (5Z,8Z,11Z,14Z)-eicosatetraenoate + H(+). It carries out the reaction prostaglandin D2-1-glycerol ester + H2O = prostaglandin D2 + glycerol + H(+). The catalysed reaction is 2-glyceryl-15-deoxy-Delta(12,14)-prostaglandin J2 + H2O = 15-deoxy-Delta(12,14)-prostaglandin J2 + glycerol + H(+). The enzyme catalyses 1-(9Z,12Z-octadecadienoyl)-glycerol + H2O = (9Z,12Z)-octadecadienoate + glycerol + H(+). Its function is as follows. Phosphatidylserine (PS) lipase that mediates the hydrolysis of phosphatidylserine to generate lysophosphatidylserine (LPS). LPS constitutes a class of signaling lipids that regulates immunological and neurological processes. Has no activity towards diacylglycerol, triacylglycerol or lysophosphatidylserine lipase. Also has monoacylglycerol lipase activity, with preference for 1-(9Z,12Z-octadecadienoyl)-glycerol (1-LG) and 2-glyceryl-15-deoxy-Delta(12,14)-prostaglandin J2 (15d-PGJ(2)-G). The polypeptide is Phosphatidylserine lipase ABHD16A (Pongo abelii (Sumatran orangutan)).